The primary structure comprises 333 residues: uncharacterized protein (333 aa).

This is an uncharacterized protein from Ictalurid herpesvirus 1 (strain Auburn) (IcHV-1).